The following is a 332-amino-acid chain: GSGNFGVAKLVRDVRTKEHFAVKFIERGHKIDEHVQREIMNHRSLKHPNIIRFKEVVLTPTHLAIVMEYASGGELFQRICNAGRFSEDEGRFFFQQLISGVSYCHSMQVCHRDLKLENTLLDGSVAPRLKICDFGYSKSSVLHSQPKSTVGTPAYIAPEVLSRREYDGKVADVWSCGVTLYVMLVGAYPFEDPDEPRNFRKTITRILSVQYSVPDYVRVSMDCIHLLSRIFVGNPQQRITIPEIKNHPWFLKRLPVEMTDEYQRSMQLADMNTPSQSLEEAMAIIQEAQKPGDNALGVAGQVACLGSMDLDDIDFDIDDIDVESSGDFVCPL.

ATP is bound by residues 1-8 and Lys23; that span reads GSGNFGVA. In terms of domain architecture, Protein kinase spans 1–250; sequence GSGNFGVAKL…IPEIKNHPWF (250 aa). Asp113 (proton acceptor) is an active-site residue.

This sequence belongs to the protein kinase superfamily. Ser/Thr protein kinase family. In terms of processing, autophosphorylated.

The catalysed reaction is L-seryl-[protein] + ATP = O-phospho-L-seryl-[protein] + ADP + H(+). It carries out the reaction L-threonyl-[protein] + ATP = O-phospho-L-threonyl-[protein] + ADP + H(+). Its function is as follows. Involved in water-stress responses. This Triticum aestivum (Wheat) protein is Abscisic acid-inducible protein kinase.